A 501-amino-acid polypeptide reads, in one-letter code: Solute carrier family 2, facilitated glucose transporter member 5 (501 aa).

M1 is modified (N-acetylmethionine). Residues 1 to 18 (MEPQDPVKREGRLTPVIV) lie on the Cytoplasmic side of the membrane. Residues 19-39 (LATLIAAFGSSFQYGYNVATI) form a helical membrane-spanning segment. Position 32 (Y32) interacts with D-fructose. Residues 40–68 (NSPSEFMKDFYNYTYYDRVGEYMNEFYLT) are Extracellular-facing. Residue N51 is glycosylated (N-linked (GlcNAc...) asparagine). Residues 69–91 (LLWSVTVSMFPFGGFLGSLMVGP) form a helical membrane-spanning segment. At 92–98 (LVNNLGR) the chain is on the cytoplasmic side. The helical transmembrane segment at 99 to 119 (KGTLLFNNIFSIVPALLMGFS) threads the bilayer. Topologically, residues 120 to 126 (DLAKSFE) are extracellular. The chain crosses the membrane as a helical span at residues 127–149 (MIIVARVLVGICAGLSSNVVPMY). Over 150–161 (LGELAPKNWRGA) the chain is Cytoplasmic. The chain crosses the membrane as a helical span at residues 162–182 (LGVVPQLFITIGILVAQIFGL). Q167 contributes to the D-fructose binding site. Over 183-192 (RSLLANEEGW) the chain is Extracellular. Residues 193–213 (PILLGLTGIPAVLQLLFLPFF) form a helical membrane-spanning segment. At 214-277 (PESPRYLLIQ…LFKMRSLRWQ (64 aa)) the chain is on the cytoplasmic side. A helical membrane pass occupies residues 278–298 (VISIIVLMAGQQLSGVNAIYY). D-fructose contacts are provided by residues Q288 and 296–298 (IYY). Over 299 to 313 (YADQIYLSAGVKEDD) the chain is Extracellular. The helical transmembrane segment at 314–334 (VQYVTAGTGAVNVLITVCAIF) threads the bilayer. Topologically, residues 335–342 (VVELMGRR) are cytoplasmic. A helical membrane pass occupies residues 343–363 (FLLLLGFSVCFTACCVLTGAL). Residues 364 to 371 (AMQDVISW) are Extracellular-facing. The chain crosses the membrane as a helical span at residues 372-394 (MPYVSIACVISYVIGHALGPSPI). Residue H387 participates in D-fructose binding. The Cytoplasmic segment spans residues 395 to 412 (PALLVTEIFLQSSRPAAY). A helical membrane pass occupies residues 413–433 (MVAGTVHWLSNFTVGLVFPFI). Position 419-420 (419-420 (HW)) interacts with D-fructose. Residues 434–439 (QVGLGA) are Extracellular-facing. Residues 440–460 (YSFVIFAVICFLTTVYIFLII) traverse the membrane as a helical segment. At 461-501 (PETKSKTFIEINQIFIKMNKVPGVHPEKEELKEFPPSTARQ) the chain is on the cytoplasmic side.

This sequence belongs to the major facilitator superfamily. Sugar transporter (TC 2.A.1.1) family. Glucose transporter subfamily.

It is found in the apical cell membrane. It localises to the cell membrane. Its subcellular location is the sarcolemma. The enzyme catalyses D-fructose(out) = D-fructose(in). Functions as a fructose transporter that has only low activity with other monosaccharides. Can mediate the uptake of deoxyglucose, but with low efficiency. Essential for fructose uptake in the small intestine. Plays a role in the regulation of salt uptake and blood pressure in response to dietary fructose. Required for the development of high blood pressure in response to high dietary fructose intake. In Ovis aries (Sheep), this protein is Solute carrier family 2, facilitated glucose transporter member 5.